The chain runs to 234 residues: Ubiquinone biosynthesis O-methyltransferase (234 aa).

Arg36, Gly56, Asp77, and Met125 together coordinate S-adenosyl-L-methionine.

The protein belongs to the methyltransferase superfamily. UbiG/COQ3 family.

It catalyses the reaction a 3-demethylubiquinol + S-adenosyl-L-methionine = a ubiquinol + S-adenosyl-L-homocysteine + H(+). The catalysed reaction is a 3-(all-trans-polyprenyl)benzene-1,2-diol + S-adenosyl-L-methionine = a 2-methoxy-6-(all-trans-polyprenyl)phenol + S-adenosyl-L-homocysteine + H(+). It participates in cofactor biosynthesis; ubiquinone biosynthesis. Functionally, O-methyltransferase that catalyzes the 2 O-methylation steps in the ubiquinone biosynthetic pathway. This chain is Ubiquinone biosynthesis O-methyltransferase, found in Actinobacillus pleuropneumoniae serotype 5b (strain L20).